We begin with the raw amino-acid sequence, 110 residues long: Large ribosomal subunit protein uL22 (110 aa).

The protein belongs to the universal ribosomal protein uL22 family. In terms of assembly, part of the 50S ribosomal subunit.

This protein binds specifically to 23S rRNA; its binding is stimulated by other ribosomal proteins, e.g. L4, L17, and L20. It is important during the early stages of 50S assembly. It makes multiple contacts with different domains of the 23S rRNA in the assembled 50S subunit and ribosome. Functionally, the globular domain of the protein is located near the polypeptide exit tunnel on the outside of the subunit, while an extended beta-hairpin is found that lines the wall of the exit tunnel in the center of the 70S ribosome. In Cellvibrio japonicus (strain Ueda107) (Pseudomonas fluorescens subsp. cellulosa), this protein is Large ribosomal subunit protein uL22.